Here is a 359-residue protein sequence, read N- to C-terminus: Phosphatidylglycerol--prolipoprotein diacylglyceryl transferase (359 aa).

Helical transmembrane passes span 24 to 44 (VALR…IVWG), 58 to 78 (VLDI…LYHV), 98 to 118 (VWQG…GAWI), and 124 to 144 (GIPL…AQAI). R146 is a binding site for a 1,2-diacyl-sn-glycero-3-phospho-(1'-sn-glycerol). 3 helical membrane passes run 193 to 213 (FVVH…VLLL), 222 to 243 (IGHG…FWIE), and 258 to 278 (VNSF…FAAT). Positions 284 to 359 (PAELRPADGG…IDSKKDDAND (76 aa)) are disordered. Residues 306 to 323 (IAQKEPEKNVEDAGKDEG) show a composition bias toward basic and acidic residues. A compositionally biased stretch (low complexity) spans 336–349 (ASTASTGGEAGTKT). Residues 350–359 (IDSKKDDAND) are compositionally biased toward basic and acidic residues.

Belongs to the Lgt family.

It is found in the cell membrane. It catalyses the reaction L-cysteinyl-[prolipoprotein] + a 1,2-diacyl-sn-glycero-3-phospho-(1'-sn-glycerol) = an S-1,2-diacyl-sn-glyceryl-L-cysteinyl-[prolipoprotein] + sn-glycerol 1-phosphate + H(+). The protein operates within protein modification; lipoprotein biosynthesis (diacylglyceryl transfer). Functionally, catalyzes the transfer of the diacylglyceryl group from phosphatidylglycerol to the sulfhydryl group of the N-terminal cysteine of a prolipoprotein, the first step in the formation of mature lipoproteins. This chain is Phosphatidylglycerol--prolipoprotein diacylglyceryl transferase, found in Rhodococcus jostii (strain RHA1).